A 318-amino-acid polypeptide reads, in one-letter code: Probable metal transport system membrane protein CT_070 (318 aa).

10 helical membrane passes run 1–21 (MVAS…LVFF), 39–59 (IQVI…TFLV), 64–84 (AMYA…VCLF), 94–114 (QALT…IHFI), 124–144 (ASTA…LVFL), 170–190 (IFLV…SFVC), 196–216 (IFAF…MLLL), 226–246 (AVGV…AKLI), 252–272 (EMMV…PALS), and 285–305 (TSGL…VFVC).

It belongs to the ABC-3 integral membrane protein family.

It localises to the cell inner membrane. In terms of biological role, part of an ATP-driven transport system CT_067/CT_068/CT_069/CT_070 for a metal. The polypeptide is Probable metal transport system membrane protein CT_070 (Chlamydia trachomatis serovar D (strain ATCC VR-885 / DSM 19411 / UW-3/Cx)).